A 257-amino-acid polypeptide reads, in one-letter code: Pyrroline-5-carboxylate reductase (257 aa).

This sequence belongs to the pyrroline-5-carboxylate reductase family.

It localises to the cytoplasm. It catalyses the reaction L-proline + NADP(+) = (S)-1-pyrroline-5-carboxylate + NADPH + 2 H(+). The catalysed reaction is L-proline + NAD(+) = (S)-1-pyrroline-5-carboxylate + NADH + 2 H(+). It functions in the pathway amino-acid biosynthesis; L-proline biosynthesis; L-proline from L-glutamate 5-semialdehyde: step 1/1. Catalyzes the reduction of 1-pyrroline-5-carboxylate (PCA) to L-proline. The polypeptide is Pyrroline-5-carboxylate reductase (Helicobacter pylori (strain ATCC 700392 / 26695) (Campylobacter pylori)).